The primary structure comprises 916 residues: Nitrate reductase [NADH] 1 (916 aa).

A disordered region spans residues 1-77 (MAASVQPRQF…DDEEEEQEDW (77 aa)). Residues 66-76 (GSDDEEEEQED) are compositionally biased toward acidic residues. Cysteine 192 is a binding site for Mo-molybdopterin. The Cytochrome b5 heme-binding domain occupies 541 to 616 (GKQFTMSEVR…LDTYRIGELI (76 aa)). 2 residues coordinate heme: histidine 576 and histidine 599. The FAD-binding FR-type domain occupies 656-768 (RDKVPCQLVD…KGPLGHVEYT (113 aa)). Residues 708 to 711 (RAYT), 725 to 729 (LIKVY), phenylalanine 730, phenylalanine 737, 742 to 744 (LMT), serine 792, and threonine 795 contribute to the FAD site.

Belongs to the nitrate reductase family. Homodimer. The cofactor is FAD. Heme is required as a cofactor. It depends on Mo-molybdopterin as a cofactor.

The catalysed reaction is nitrite + NAD(+) + H2O = nitrate + NADH + H(+). Its function is as follows. Nitrate reductase is a key enzyme involved in the first step of nitrate assimilation in plants, fungi and bacteria. The sequence is that of Nitrate reductase [NADH] 1 (NIA1) from Oryza sativa subsp. japonica (Rice).